We begin with the raw amino-acid sequence, 326 residues long: Undecaprenyl-phosphate 4-deoxy-4-formamido-L-arabinose transferase (326 aa).

Topologically, residues 1 to 235 are cytoplasmic; it reads MFEIHPIKKV…TCLTTTPLRM (235 aa). The chain crosses the membrane as a helical span at residues 236–256; it reads LSLLGSIIATSGFSLAILLVV. The Periplasmic portion of the chain corresponds to 257-269; it reads LRLAFGSQWSGEG. A helical membrane pass occupies residues 270 to 290; sequence VFMLFAVLFTFIGAQFIGMGL. The Cytoplasmic portion of the chain corresponds to 291–326; sequence LGEYIGRIYNDVRARPRYFVQKVIRPASSIDIEENH.

Belongs to the glycosyltransferase 2 family.

It is found in the cell inner membrane. The enzyme catalyses UDP-4-deoxy-4-formamido-beta-L-arabinose + di-trans,octa-cis-undecaprenyl phosphate = 4-deoxy-4-formamido-alpha-L-arabinopyranosyl di-trans,octa-cis-undecaprenyl phosphate + UDP. Its pathway is glycolipid biosynthesis; 4-amino-4-deoxy-alpha-L-arabinose undecaprenyl phosphate biosynthesis; 4-amino-4-deoxy-alpha-L-arabinose undecaprenyl phosphate from UDP-4-deoxy-4-formamido-beta-L-arabinose and undecaprenyl phosphate: step 1/2. The protein operates within bacterial outer membrane biogenesis; lipopolysaccharide biosynthesis. Its function is as follows. Catalyzes the transfer of 4-deoxy-4-formamido-L-arabinose from UDP to undecaprenyl phosphate. The modified arabinose is attached to lipid A and is required for resistance to polymyxin and cationic antimicrobial peptides. This is Undecaprenyl-phosphate 4-deoxy-4-formamido-L-arabinose transferase from Escherichia fergusonii (strain ATCC 35469 / DSM 13698 / CCUG 18766 / IAM 14443 / JCM 21226 / LMG 7866 / NBRC 102419 / NCTC 12128 / CDC 0568-73).